The primary structure comprises 622 residues: uncharacterized protein (622 aa).

Over residues 157 to 166 (LKESPLRDQQ) the composition is skewed to basic and acidic residues. Residues 157–238 (LKESPLRDQQ…GLPDHNSISE (82 aa)) form a disordered region.

This is an uncharacterized protein from Homo sapiens (Human).